Reading from the N-terminus, the 862-residue chain is Eukaryotic translation initiation factor 3 subunit C (862 aa).

Positions Met1–Ser10 are enriched in gly residues. Positions Met1 to Ser81 are disordered. Residues Ser16–Gly52 show a composition bias toward acidic residues. The 175-residue stretch at Phe601–Glu775 folds into the PCI domain. The segment at Arg814–Ala862 is disordered. Positions Gly819–Arg833 are enriched in gly residues. Over residues Gly835–Arg844 the composition is skewed to low complexity. Over residues Arg845–Ala862 the composition is skewed to gly residues.

The protein belongs to the eIF-3 subunit C family. As to quaternary structure, component of the eukaryotic translation initiation factor 3 (eIF-3) complex.

The protein resides in the cytoplasm. Its function is as follows. Component of the eukaryotic translation initiation factor 3 (eIF-3) complex, which is involved in protein synthesis of a specialized repertoire of mRNAs and, together with other initiation factors, stimulates binding of mRNA and methionyl-tRNAi to the 40S ribosome. The eIF-3 complex specifically targets and initiates translation of a subset of mRNAs involved in cell proliferation. This is Eukaryotic translation initiation factor 3 subunit C (nip1) from Aspergillus clavatus (strain ATCC 1007 / CBS 513.65 / DSM 816 / NCTC 3887 / NRRL 1 / QM 1276 / 107).